A 69-amino-acid chain; its full sequence is MKNLLICIIKMYRKYISPLKRPSCRFYPTCSQYSLEAIEKYGALKGTLISIKRILKCHPFNEGGYDPVK.

This sequence belongs to the UPF0161 family.

The protein resides in the cell membrane. In terms of biological role, could be involved in insertion of integral membrane proteins into the membrane. The polypeptide is Putative membrane protein insertion efficiency factor (Clostridium botulinum (strain Kyoto / Type A2)).